The chain runs to 105 residues: uncharacterized protein (105 aa).

The disordered stretch occupies residues 1-27 (MSLKSWHPQSKTKRVGASEGNPQWGSG).

This is an uncharacterized protein from Homo sapiens (Human).